Consider the following 257-residue polypeptide: Aspartate/glutamate leucyltransferase (257 aa).

Belongs to the R-transferase family. Bpt subfamily.

The protein resides in the cytoplasm. The catalysed reaction is N-terminal L-glutamyl-[protein] + L-leucyl-tRNA(Leu) = N-terminal L-leucyl-L-glutamyl-[protein] + tRNA(Leu) + H(+). It catalyses the reaction N-terminal L-aspartyl-[protein] + L-leucyl-tRNA(Leu) = N-terminal L-leucyl-L-aspartyl-[protein] + tRNA(Leu) + H(+). Functionally, functions in the N-end rule pathway of protein degradation where it conjugates Leu from its aminoacyl-tRNA to the N-termini of proteins containing an N-terminal aspartate or glutamate. This is Aspartate/glutamate leucyltransferase from Phenylobacterium zucineum (strain HLK1).